The primary structure comprises 74 residues: Large ribosomal subunit protein bL31 (74 aa).

4 residues coordinate Zn(2+): cysteine 16, cysteine 18, cysteine 37, and cysteine 40.

Belongs to the bacterial ribosomal protein bL31 family. Type A subfamily. In terms of assembly, part of the 50S ribosomal subunit. Zn(2+) serves as cofactor.

Functionally, binds the 23S rRNA. This chain is Large ribosomal subunit protein bL31, found in Koribacter versatilis (strain Ellin345).